The following is an 800-amino-acid chain: MKYGYFDNDNREYVITRPDVPAPWTNYLGTEKFCTVISHNAGGYSFYHSPEYNRVTKFRPNFTQDRPGHYIYLRDDETGDFWSVSWQPVAKNLDDAHYEVRHGLSYSKFRCDYNGIVATKTLFVPKGEDAQVWDVEIENTSDQPRTISAFGYVEFSFSHIASDNQNHQMSLYSAGTEYNNGVLEYDLYYNTDDFLGFYYLTATFDADSYDGQRDAFLGMYRDEANPIAVANGRCSNSAQTCYNHCGALHKQFVLQPGEKVRFAVILGVGKGNGEKLRAKYQDLSQVDAAFAGIKQHWDERCAKFQVRSPNQGLDTMINAWTLYQAETCVVWSRFASFIEVGGRTGLGYRDTAQDAISVPHTNPAMTRKRLVDLLRGQVKAGYGLHLFDPDWFDPEKADVKPSKSPTVVPTPSDEDKIHGIKDTCSDDHLWIVPTILNFVKETGDLSFIDEVIPYADGGDATVYQHMMAALDFSAEYVGQTGICKGLRADWNDCLNLGGGESAMVSFLHFWALEAFLELARHRQDAAAIDKYQAMANGVREACETHLWDDNGGWYIRGLTKDGDKIGTFEQQEGKVHLESNTLAVLSGAVSQQRGEKAMDAVYEYLFSPYGLHLNAPSFATPNDDIGFVTRVYQGVKENGAIFSHPNPWAWVAEAKLGRGDRAMEFYDSLNPYNQNDIIETRVAEPYSYVQFIMGRDHQDHGRANHPWLTGTSGWAYYATTNFILGVRTGFDTLTVDPCIPAAWSGFEVTREWRGATYHISVQNPNGVSKGVQSILVNGEAVDAINAQPAGSENQVTVILG.

Positions 333, 343, 349, 350, 490, and 492 each coordinate N-acetyl-alpha-D-glucosamine 1-phosphate. The Proton donor role is filled by Asp492. Positions 492, 636, and 637 each coordinate N-acetyl-D-glucosamine. Residues Glu637, His644, Gln690, Thr709, and Gly710 each contribute to the N-acetyl-alpha-D-glucosamine 1-phosphate site.

This sequence belongs to the glycosyl hydrolase 94 family. In terms of assembly, homodimer.

It carries out the reaction N,N'-diacetylchitobiose + phosphate = N-acetyl-alpha-D-glucosamine 1-phosphate + N-acetyl-D-glucosamine. In terms of biological role, catalyzes the reversible phosphorolysis of chitobiose (N,N'-diacetylchitobiose or (GlcNAc)(2)) into N-acetyl-alpha-D-glucosamine 1-phosphate (GlcNAc-1-P) and N-acetyl-D-glucosamine (GlcNAc) with inversion of the anomeric configuration. The protein is N,N'-diacetylchitobiose phosphorylase of Vibrio furnissii.